The following is a 356-amino-acid chain: Dual-specificity RNA methyltransferase RlmN (356 aa).

Glu-89 functions as the Proton acceptor in the catalytic mechanism. A Radical SAM core domain is found at 108–341; that stretch reads SHARYTICVS…CTIRESKGLD (234 aa). The cysteines at positions 115 and 346 are disulfide-linked. [4Fe-4S] cluster contacts are provided by Cys-122, Cys-126, and Cys-129. S-adenosyl-L-methionine is bound by residues 172–173, Ser-204, 227–229, and Asn-303; these read GE and SLH. Cys-346 serves as the catalytic S-methylcysteine intermediate.

This sequence belongs to the radical SAM superfamily. RlmN family. It depends on [4Fe-4S] cluster as a cofactor.

Its subcellular location is the cytoplasm. It catalyses the reaction adenosine(2503) in 23S rRNA + 2 reduced [2Fe-2S]-[ferredoxin] + 2 S-adenosyl-L-methionine = 2-methyladenosine(2503) in 23S rRNA + 5'-deoxyadenosine + L-methionine + 2 oxidized [2Fe-2S]-[ferredoxin] + S-adenosyl-L-homocysteine. It carries out the reaction adenosine(37) in tRNA + 2 reduced [2Fe-2S]-[ferredoxin] + 2 S-adenosyl-L-methionine = 2-methyladenosine(37) in tRNA + 5'-deoxyadenosine + L-methionine + 2 oxidized [2Fe-2S]-[ferredoxin] + S-adenosyl-L-homocysteine. Specifically methylates position 2 of adenine 2503 in 23S rRNA and position 2 of adenine 37 in tRNAs. m2A2503 modification seems to play a crucial role in the proofreading step occurring at the peptidyl transferase center and thus would serve to optimize ribosomal fidelity. The sequence is that of Dual-specificity RNA methyltransferase RlmN from Campylobacter jejuni (strain RM1221).